The primary structure comprises 380 residues: Flap endonuclease 1-A (380 aa).

The segment at 1–105 is N-domain; the sequence is MGIKGLTKLL…EELAKRFSKR (105 aa). D34 contacts Mg(2+). R71 serves as a coordination point for DNA. Mg(2+)-binding residues include D87, E159, E161, D180, and D182. The interval 123 to 254 is I-domain; that stretch reads AVEKLSKRTV…QTALKLIRQH (132 aa). E159 contacts DNA. Residues G232 and D234 each coordinate DNA. D234 serves as a coordination point for Mg(2+). Residues 336–344 form an interaction with PCNA region; sequence SQGRLESFF. The tract at residues 351-380 is disordered; sequence SAPLKRKETSDKTSKAAAANKKTKAGGKKK. Positions 355–364 are enriched in basic and acidic residues; that stretch reads KRKETSDKTS. Basic residues predominate over residues 371 to 380; the sequence is KKTKAGGKKK.

It belongs to the XPG/RAD2 endonuclease family. FEN1 subfamily. As to quaternary structure, interacts with PCNA. Three molecules of FEN1 bind to one PCNA trimer with each molecule binding to one PCNA monomer. PCNA stimulates the nuclease activity without altering cleavage specificity. Mg(2+) serves as cofactor. Post-translationally, phosphorylated. Phosphorylation upon DNA damage induces relocalization to the nuclear plasma.

It is found in the nucleus. Its subcellular location is the nucleolus. It localises to the nucleoplasm. The protein localises to the mitochondrion. Structure-specific nuclease with 5'-flap endonuclease and 5'-3' exonuclease activities involved in DNA replication and repair. During DNA replication, cleaves the 5'-overhanging flap structure that is generated by displacement synthesis when DNA polymerase encounters the 5'-end of a downstream Okazaki fragment. It enters the flap from the 5'-end and then tracks to cleave the flap base, leaving a nick for ligation. Also involved in the long patch base excision repair (LP-BER) pathway, by cleaving within the apurinic/apyrimidinic (AP) site-terminated flap. Acts as a genome stabilization factor that prevents flaps from equilibrating into structures that lead to duplications and deletions. Also possesses 5'-3' exonuclease activity on nicked or gapped double-stranded DNA, and exhibits RNase H activity. Also involved in replication and repair of rDNA and in repairing mitochondrial DNA. The polypeptide is Flap endonuclease 1-A (Sorghum bicolor (Sorghum)).